The sequence spans 901 residues: HTH-type transcriptional regulator MalT (901 aa).

Residue 39–46 (SPAGYGKT) participates in ATP binding. Positions 829 to 894 (ELIRTSPLTQ…AAVQHAQKLL (66 aa)) constitute an HTH luxR-type domain. The H-T-H motif DNA-binding region spans 853 to 872 (NEQIAGELEVAATTIKTHIR).

This sequence belongs to the MalT family. As to quaternary structure, monomer in solution. Oligomerizes to an active state in the presence of the positive effectors ATP and maltotriose.

Activated by ATP and maltotriose, which are both required for DNA binding. Functionally, positively regulates the transcription of the maltose regulon whose gene products are responsible for uptake and catabolism of malto-oligosaccharides. Specifically binds to the promoter region of its target genes, recognizing a short DNA motif called the MalT box. The chain is HTH-type transcriptional regulator MalT from Escherichia coli O6:H1 (strain CFT073 / ATCC 700928 / UPEC).